Reading from the N-terminus, the 188-residue chain is Acyl-acyl carrier protein thioesterase ATL2, chloroplastic (188 aa).

The transit peptide at 1 to 47 (MFQATSTGAQIMHAAFPRSWRRGHVLPLRSAKIFKPLACLELRGSTG) directs the protein to the chloroplast. Aspartate 64 is an active-site residue.

It belongs to the 4-hydroxybenzoyl-CoA thioesterase family. Expressed in endodermal and peridermal cells in young and mature roots, in boundaries of stem lateral organs and developing seeds.

Its subcellular location is the plastid. The protein resides in the chloroplast. Acyl-ACP thioesterase involved in the production of fatty acids and beta-keto fatty acids. Can produce beta-keto fatty acids of medium chain (8:0 and 10:0) and small amounts of 8:0 fatty acid when expressed in a heterologous organism (E.coli). May play a role in suberin biosynthesis. The chain is Acyl-acyl carrier protein thioesterase ATL2, chloroplastic from Arabidopsis thaliana (Mouse-ear cress).